Consider the following 1946-residue polypeptide: Sickle tail protein (1946 aa).

Disordered stretches follow at residues 1 to 83 and 113 to 176; these read MEES…GMQP and ERLR…VRSA. The span at 18-36 shows a compositional bias: polar residues; that stretch reads DSRQMPQQGRSNLHVTSQE. Positions 38 to 47 are enriched in basic and acidic residues; it reads AACRRPRERL. Ser-169 carries the post-translational modification Phosphoserine. Position 244 is a phosphotyrosine (Tyr-244). Disordered stretches follow at residues 305-324 and 339-374; these read HPPH…HSLP and AIPG…RDVK. Positions 308–324 are enriched in pro residues; the sequence is HVIPNSPPSTPVPHSLP. The segment covering 352–367 has biased composition (low complexity); sequence SSLPVSRSISPSPSAI. O-linked (GlcNAc) serine glycosylation occurs at Ser-357. A phosphoserine mark is found at Ser-361 and Ser-365. Phosphotyrosine is present on Tyr-393. Positions 455 to 512 are disordered; it reads SRKYPDSHLPTLGSKTPPASPHRVGDLRMIDLHPHLNTHGPPHTLQPDRASPSRQSFK. Position 470 is a phosphothreonine (Thr-470). Residue Ser-474 is modified to Phosphoserine. The segment covering 477-488 has biased composition (basic and acidic residues); the sequence is RVGDLRMIDLHP. Coiled-coil stretches lie at residues 557–581 and 644–685; these read RETR…QSAL and TSLL…ELEI. Ser-809 carries the post-translational modification Phosphoserine. 2 disordered regions span residues 853-875 and 891-947; these read EETA…DVKS and SPVV…PVNG. Polar residues-rich tracts occupy residues 891-909 and 927-947; these read SPVV…NPAQ and QEVT…PVNG. Residues 962–990 adopt a coiled-coil conformation; it reads SAKNRAVSIEKAEKKWEEKRQNLEHYNGK. The interval 1008–1221 is disordered; sequence PNLEMPPASS…LRPSGPPKWE (214 aa). 4 positions are modified to phosphoserine: Ser-1032, Ser-1035, Ser-1038, and Ser-1049. The segment covering 1049-1058 has biased composition (pro residues); it reads SPPPPPPPPR. Residues 1151 to 1162 show a composition bias toward polar residues; that stretch reads NPNSHAEQSRAN. Basic and acidic residues predominate over residues 1176–1194; the sequence is PKEKKNLEFYHEDVRKSDV. Ser-1466 bears the Phosphoserine mark. The stretch at 1469-1495 forms a coiled coil; the sequence is FEECDEELERMLTEEKIEEEEEDENED. Disordered stretches follow at residues 1482 to 1567, 1622 to 1664, and 1691 to 1946; these read EEKI…VDDQ, AKRF…RKST, and VDTS…KETS. A compositionally biased stretch (acidic residues) spans 1484–1495; it reads KIEEEEEDENED. The span at 1498-1508 shows a compositional bias: polar residues; it reads VRTSSQMSCEQ. Basic and acidic residues-rich tracts occupy residues 1509 to 1518 and 1622 to 1644; these read VDSRSDRMGQ and AKRF…RRQE. The stretch at 1659–1688 forms a coiled coil; the sequence is EIRKSTYRTLDSLEQTIKQLENTISEMSPR. The segment covering 1739–1759 has biased composition (polar residues); sequence KGSSTTPQTSRMPVPMTSKNR. Position 1741 is a phosphoserine (Ser-1741). Residues 1765 to 1777 show a composition bias toward basic and acidic residues; sequence KASKQSKLQDPRQ. Low complexity predominate over residues 1806-1825; it reads ALSPSSGKSSSLPSASGDSS. Ser-1843 carries the phosphoserine modification. Residues 1851–1866 are compositionally biased toward polar residues; sequence HSASLIPSVSNGSLKF. Positions 1890–1899 are enriched in low complexity; that stretch reads AAPTTSSSSS. Residues Ser-1899, Ser-1902, and Ser-1905 each carry the phosphoserine modification. A compositionally biased stretch (polar residues) spans 1920 to 1946; the sequence is HTPSLASYKAQNGSSSKATPSTAKETS.

As to quaternary structure, interacts with CPNE4 (via VWFA domain). As to expression, expressed predominantly in the notochord and mesonephros during embryogenesis as well as in other areas such as the epithalamus sulcus, lens vesicle, inner retinal layer, heart, hepatic primordial surface, infundibulum, surface ectoderm, hind gut and limb bud mesenchyme. In adults, expressed in a range of tissues including the nucleus pulposus, corpus callosum, kidney, cardiac muscle, Sertoli cells and hair follicles.

It localises to the cytoplasm. Its subcellular location is the cytoskeleton. The protein localises to the microtubule organizing center. It is found in the centrosome. Its function is as follows. Required for normal development of intervertebral disks. The protein is Sickle tail protein of Mus musculus (Mouse).